Reading from the N-terminus, the 2304-residue chain is Protein Ycf2 (2304 aa).

1637-1644 (GSIGTGRS) is an ATP binding site.

Belongs to the Ycf2 family.

The protein resides in the plastid. It localises to the chloroplast stroma. Its function is as follows. Probable ATPase of unknown function. Its presence in a non-photosynthetic plant (Epifagus virginiana) and experiments in tobacco indicate that it has an essential function which is probably not related to photosynthesis. The sequence is that of Protein Ycf2 from Amborella trichopoda.